The chain runs to 424 residues: Histidine--tRNA ligase (424 aa).

The protein belongs to the class-II aminoacyl-tRNA synthetase family. Homodimer.

The protein resides in the cytoplasm. It carries out the reaction tRNA(His) + L-histidine + ATP = L-histidyl-tRNA(His) + AMP + diphosphate + H(+). This is Histidine--tRNA ligase from Salmonella gallinarum (strain 287/91 / NCTC 13346).